Consider the following 216-residue polypeptide: Large ribosomal subunit protein bL21 (216 aa).

It belongs to the bacterial ribosomal protein bL21 family. In terms of assembly, part of the 50S ribosomal subunit. Contacts protein L20.

In terms of biological role, this protein binds to 23S rRNA in the presence of protein L20. This chain is Large ribosomal subunit protein bL21, found in Roseobacter denitrificans (strain ATCC 33942 / OCh 114) (Erythrobacter sp. (strain OCh 114)).